Here is a 301-residue protein sequence, read N- to C-terminus: MVTPIAVVGPTASGKSALGIALAHKLDGEVVNVDSMQLYKGMDIGTAKLTVEEREGIAHHQLDVWDVTETASVARFQSDAVADVEDIMSRGKTPILVGGSMLYVQSLVDDWQFPPTDSAVRARFEARLADIGVEALHAELTQLDPEAAAVIESNDPRRTVRALEVIELTGQPFQASQPPKDAPPRWGTRIIGLKTTPEWLNPRIEQRTARMFEQGFVAEVEHLVQQGLIADSTAGRAIGYSQVLAAMAGEMTWEDAFERTVTGTRRYVRRQRSWFNRDHRVSWVDASGDPTAQALEILGLQ.

9–16 (GPTASGKS) is a binding site for ATP. 11 to 16 (TASGKS) lines the substrate pocket. Positions 34-37 (DSMQ) are interaction with substrate tRNA.

This sequence belongs to the IPP transferase family. In terms of assembly, monomer. Requires Mg(2+) as cofactor.

It catalyses the reaction adenosine(37) in tRNA + dimethylallyl diphosphate = N(6)-dimethylallyladenosine(37) in tRNA + diphosphate. Its function is as follows. Catalyzes the transfer of a dimethylallyl group onto the adenine at position 37 in tRNAs that read codons beginning with uridine, leading to the formation of N6-(dimethylallyl)adenosine (i(6)A). The chain is tRNA dimethylallyltransferase from Corynebacterium glutamicum (strain ATCC 13032 / DSM 20300 / JCM 1318 / BCRC 11384 / CCUG 27702 / LMG 3730 / NBRC 12168 / NCIMB 10025 / NRRL B-2784 / 534).